A 199-amino-acid polypeptide reads, in one-letter code: MKSESAAIDIPESSSVAKGKAPLIAVSRNEKGGYRKGIAIFDFILRLAAIATALAAAAAMGTSDETLPFFTQFFQFQASYDDLPTFQFFVIAIAIVGGYLVLSLPFSIVAIVRPHAVGPRLLLIILDAVALTLNTAAGAAAAAIVYLAHNGNSNTNWLAICQQYGDFCQKVSGAVVASFITVVIFVFLIVLSAFALRRH.

At 1–37 the chain is on the cytoplasmic side; the sequence is MKSESAAIDIPESSSVAKGKAPLIAVSRNEKGGYRKG. The helical transmembrane segment at 38–58 threads the bilayer; sequence IAIFDFILRLAAIATALAAAA. At 59 to 87 the chain is on the extracellular side; it reads AMGTSDETLPFFTQFFQFQASYDDLPTFQ. A helical membrane pass occupies residues 88–108; sequence FFVIAIAIVGGYLVLSLPFSI. Residues 109 to 120 are Cytoplasmic-facing; it reads VAIVRPHAVGPR. Residues 121 to 141 traverse the membrane as a helical segment; that stretch reads LLLIILDAVALTLNTAAGAAA. At 142 to 173 the chain is on the extracellular side; that stretch reads AAIVYLAHNGNSNTNWLAICQQYGDFCQKVSG. The chain crosses the membrane as a helical span at residues 174 to 194; it reads AVVASFITVVIFVFLIVLSAF. At 195–199 the chain is on the cytoplasmic side; the sequence is ALRRH.

It belongs to the Casparian strip membrane proteins (CASP) family. In terms of assembly, homodimer and heterodimers.

The protein localises to the cell membrane. Regulates membrane-cell wall junctions and localized cell wall deposition. Required for establishment of the Casparian strip membrane domain (CSD) and the subsequent formation of Casparian strips, a cell wall modification of the root endodermis that determines an apoplastic barrier between the intraorganismal apoplasm and the extraorganismal apoplasm and prevents lateral diffusion. This Populus trichocarpa (Western balsam poplar) protein is Casparian strip membrane protein 1.